A 448-amino-acid chain; its full sequence is Probable glycine dehydrogenase (decarboxylating) subunit 1 (448 aa).

This sequence belongs to the GcvP family. N-terminal subunit subfamily. As to quaternary structure, the glycine cleavage system is composed of four proteins: P, T, L and H. In this organism, the P 'protein' is a heterodimer of two subunits.

The enzyme catalyses N(6)-[(R)-lipoyl]-L-lysyl-[glycine-cleavage complex H protein] + glycine + H(+) = N(6)-[(R)-S(8)-aminomethyldihydrolipoyl]-L-lysyl-[glycine-cleavage complex H protein] + CO2. Functionally, the glycine cleavage system catalyzes the degradation of glycine. The P protein binds the alpha-amino group of glycine through its pyridoxal phosphate cofactor; CO(2) is released and the remaining methylamine moiety is then transferred to the lipoamide cofactor of the H protein. This chain is Probable glycine dehydrogenase (decarboxylating) subunit 1, found in Staphylococcus carnosus (strain TM300).